Here is a 174-residue protein sequence, read N- to C-terminus: Gamma-crystallin C (174 aa).

2 consecutive Beta/gamma crystallin 'Greek key' domains span residues 2–40 and 41–83; these read GKITFFEDRSFQGRCYECSSDCPNLQTYFSRCNSVRVDS and GCWM…RLIP. Cysteine 23 carries the S-methylcysteine modification. The segment at 84–87 is connecting peptide; that stretch reads HAGS. Beta/gamma crystallin 'Greek key' domains follow at residues 88 to 128 and 129 to 171; these read HRMR…QVLE and GCWV…RRVV.

Belongs to the beta/gamma-crystallin family.

Crystallins are the dominant structural components of the vertebrate eye lens. The chain is Gamma-crystallin C (Crygc) from Mus musculus (Mouse).